A 151-amino-acid chain; its full sequence is 3-hydroxyacyl-[acyl-carrier-protein] dehydratase FabZ (151 aa).

His-57 is an active-site residue.

This sequence belongs to the thioester dehydratase family. FabZ subfamily.

It localises to the cytoplasm. It catalyses the reaction a (3R)-hydroxyacyl-[ACP] = a (2E)-enoyl-[ACP] + H2O. Functionally, involved in unsaturated fatty acids biosynthesis. Catalyzes the dehydration of short chain beta-hydroxyacyl-ACPs and long chain saturated and unsaturated beta-hydroxyacyl-ACPs. The chain is 3-hydroxyacyl-[acyl-carrier-protein] dehydratase FabZ from Prochlorococcus marinus (strain SARG / CCMP1375 / SS120).